We begin with the raw amino-acid sequence, 445 residues long: Rab GDP dissociation inhibitor beta (445 aa).

Methionine 1 is subject to N-acetylmethionine. N6-succinyllysine is present on lysine 57. The residue at position 112 (lysine 112) is an N6-acetyllysine. The residue at position 130 (serine 130) is a Phosphoserine. An N6-acetyllysine modification is found at lysine 269. Position 382 is a phosphoserine (serine 382).

It belongs to the Rab GDI family. As to quaternary structure, interacts with RHOH. Interacts with the GDP-bound inactive forms of RAB3A, RAB3B, RAB3C, RAB5A, RAB5B, RAB5C, RAB8A, RAB8B, RAB10, RAB12, RAB35, and RAB43; binds RAB3D to a lesser extent. Interacts with DZIP1; this interaction negatively regulates the interaction of GDI2 with GDP-bound RAB8A.

Its subcellular location is the cytoplasm. It localises to the membrane. The protein resides in the golgi apparatus. The protein localises to the trans-Golgi network. Its function is as follows. GDP-dissociation inhibitor preventing the GDP to GTP exchange of most Rab proteins. By keeping these small GTPases in their inactive GDP-bound form regulates intracellular membrane trafficking. Negatively regulates protein transport to the cilium and ciliogenesis through the inhibition of RAB8A. This Pongo abelii (Sumatran orangutan) protein is Rab GDP dissociation inhibitor beta (GDI2).